The sequence spans 199 residues: Urease accessory protein UreG (199 aa).

Position 8–15 (8–15 (GPVGSGKT)) interacts with GTP.

It belongs to the SIMIBI class G3E GTPase family. UreG subfamily. Homodimer. UreH, UreF and UreG form a complex that acts as a GTP-hydrolysis-dependent molecular chaperone, activating the urease apoprotein by helping to assemble the nickel containing metallocenter of UreC. The UreE protein probably delivers the nickel.

The protein resides in the cytoplasm. In terms of biological role, facilitates the functional incorporation of the urease nickel metallocenter. This process requires GTP hydrolysis, probably effectuated by UreG. The sequence is that of Urease accessory protein UreG from Helicobacter acinonychis (strain Sheeba).